The following is a 414-amino-acid chain: Esterase FrsA (414 aa).

This sequence belongs to the FrsA family.

The catalysed reaction is a carboxylic ester + H2O = an alcohol + a carboxylate + H(+). In terms of biological role, catalyzes the hydrolysis of esters. The chain is Esterase FrsA from Enterobacter sp. (strain 638).